The primary structure comprises 124 residues: Cytochrome c2 (124 aa).

Gln-1 carries the post-translational modification Pyrrolidone carboxylic acid. Residues Cys-15, Cys-18, His-19, and Met-100 each contribute to the heme c site.

In terms of processing, binds 1 heme c group covalently per subunit.

It localises to the periplasm. Functionally, cytochrome c2 is found mainly in purple, non-sulfur, photosynthetic bacteria where it functions as the electron donor to the oxidized bacteriochlorophyll in the photophosphorylation pathway. However, it may also have a role in the respiratory chain and is found in some non-photosynthetic bacteria. The polypeptide is Cytochrome c2 (cycA) (Cereibacter sphaeroides (Rhodobacter sphaeroides)).